A 119-amino-acid chain; its full sequence is Large ribosomal subunit protein bL20c (119 aa).

It belongs to the bacterial ribosomal protein bL20 family.

It localises to the plastid. The protein resides in the chloroplast. Binds directly to 23S ribosomal RNA and is necessary for the in vitro assembly process of the 50S ribosomal subunit. It is not involved in the protein synthesizing functions of that subunit. This chain is Large ribosomal subunit protein bL20c, found in Nandina domestica (Heavenly bamboo).